Consider the following 181-residue polypeptide: Isopentenyl-diphosphate Delta-isomerase (181 aa).

Mn(2+) is bound by residues histidine 29 and histidine 36. The Nudix hydrolase domain maps to proline 34–glutamate 167. Residue cysteine 71 is part of the active site. Residue histidine 73 coordinates Mn(2+). Residue glutamate 91 participates in Mg(2+) binding. Positions 118 and 120 each coordinate Mn(2+). Residue glutamate 120 is part of the active site.

Belongs to the IPP isomerase type 1 family. It depends on Mg(2+) as a cofactor. Mn(2+) is required as a cofactor.

The protein localises to the cytoplasm. It catalyses the reaction isopentenyl diphosphate = dimethylallyl diphosphate. Its pathway is isoprenoid biosynthesis; dimethylallyl diphosphate biosynthesis; dimethylallyl diphosphate from isopentenyl diphosphate: step 1/1. In terms of biological role, catalyzes the 1,3-allylic rearrangement of the homoallylic substrate isopentenyl (IPP) to its highly electrophilic allylic isomer, dimethylallyl diphosphate (DMAPP). This chain is Isopentenyl-diphosphate Delta-isomerase, found in Mycolicibacterium vanbaalenii (strain DSM 7251 / JCM 13017 / BCRC 16820 / KCTC 9966 / NRRL B-24157 / PYR-1) (Mycobacterium vanbaalenii).